A 276-amino-acid chain; its full sequence is Rhomboid protease GlpG (276 aa).

6 helical membrane passes run 94–114 (GPVTWIVMIACVLVYIAMSLI), 142–162 (IFMHFSLMHILFNLLWWWYLG), 169–189 (LGSGKLIVITVVSALLSGYVQ), 192–212 (FSGPWFGGLSGVVYALMGYVW), 229–249 (LIIFALLWIVAGWFDWFGMSM), and 250–270 (ANGAHIAGLIVGLAMAFVDTL). Ser201 acts as the Nucleophile in catalysis. His254 is a catalytic residue.

Belongs to the peptidase S54 family.

The protein resides in the cell inner membrane. It carries out the reaction Cleaves type-1 transmembrane domains using a catalytic dyad composed of serine and histidine that are contributed by different transmembrane domains.. Its function is as follows. Rhomboid-type serine protease that catalyzes intramembrane proteolysis. In Salmonella choleraesuis (strain SC-B67), this protein is Rhomboid protease GlpG.